Here is a 208-residue protein sequence, read N- to C-terminus: MARYTGPSCRLCRRENTELFLKGERCYTDKCAIKRRNYPPGQHGQGRSKTSDYGVQLREKQKVRRIYGILENQFRGYFERADRLKGVTGENLLFLLERRLDNIVYRLGFASSRIEARQLVRHGHFTLNGKKVTIPSIQVKTGDTVELREKSRKVASINESLEAVVRRGIPQWLELDKGAFKGSVKTLPVREDITMPIQEQLIVELYSK.

The S4 RNA-binding domain maps to 98-158 (RRLDNIVYRL…EKSRKVASIN (61 aa)).

The protein belongs to the universal ribosomal protein uS4 family. In terms of assembly, part of the 30S ribosomal subunit. Contacts protein S5. The interaction surface between S4 and S5 is involved in control of translational fidelity.

In terms of biological role, one of the primary rRNA binding proteins, it binds directly to 16S rRNA where it nucleates assembly of the body of the 30S subunit. With S5 and S12 plays an important role in translational accuracy. The sequence is that of Small ribosomal subunit protein uS4 from Geotalea daltonii (strain DSM 22248 / JCM 15807 / FRC-32) (Geobacter daltonii).